The chain runs to 227 residues: Basic leucine zipper 24 (227 aa).

The segment at 44 to 68 (EDKDQDRVTRGCSHTHSCNPPGPED) is disordered. The bZIP domain occupies 94-160 (DSSNKKRLCG…IRLRALLVEM (67 aa)). The basic motif stretch occupies residues 98–118 (KKRLCGNREAVRKYREKKKAR). Positions 122 to 129 (LEDEVMRL) are leucine-zipper.

In terms of assembly, homodimer. In terms of tissue distribution, expressed in young leaves and cauline leaves.

It localises to the nucleus. It is found in the cytoplasm. Transcription factor involved in the regulation of salt stress response. Functions as a negative transcriptional regulator of salt stress acclimation response by regulating cation homeostasis. Negatively regulates the expression of genes contributing to ion and osmotic homeostasis during salt stress, such as the Na(+) transporter HKT1, the Na(+)/H(+) antiporter SOS1, the aquaporin PIP2-1 and the glutamine synthetase GLN1-3. In addition, targets genes with functions in plant growth and development, such as argonaute 4 (AGO4) and cyclophilin 19 (CYP19). The sequence is that of Basic leucine zipper 24 from Arabidopsis thaliana (Mouse-ear cress).